The following is a 382-amino-acid chain: Ubiquitin-like protease 4 (382 aa).

Positions 46–106 (GTHLDGSIGE…DNDEWTNQKR (61 aa)) are disordered. The span at 84 to 100 (DLVDEDEEEEDEEDNDE) shows a compositional bias: acidic residues.

Belongs to the peptidase C48 family. Expressed in hermaphrodite-specific neurons, head muscles, body wall muscles and pharyngeal cells.

The protein localises to the cytoplasm. Its subcellular location is the cytoskeleton. It is found in the microtubule organizing center. The protein resides in the centrosome. It localises to the nucleus. The protein localises to the mitochondrion matrix. The protein operates within protein modification; protein sumoylation. Protease required for deconjugation of smo-1 conjugates from target proteins which is necessary for cell cycle progression. Required for respiration and the maintenance of normal mitochondrial homeostasis. In response to mitochondrial stress, required for the removal of smo-1 conjugates from the transcription factor dve-1, which promotes the translocation of dve-1 from the cytosol to the nucleus to initiate the mitochondrial unfolded protein response. Furthermore, removes the smo-1 conjugates from the transcription factor atfs-1 to promote its stability and activate the mitochondrial unfolded protein response. Also plays a role in promoting mitochondrial unfolded protein response-mediated innate immunity following infection with P.aeruginosa. This chain is Ubiquitin-like protease 4, found in Caenorhabditis elegans.